We begin with the raw amino-acid sequence, 161 residues long: Nucleotide-binding protein RSc2549 (161 aa).

Belongs to the YajQ family.

Functionally, nucleotide-binding protein. The polypeptide is Nucleotide-binding protein RSc2549 (Ralstonia nicotianae (strain ATCC BAA-1114 / GMI1000) (Ralstonia solanacearum)).